The primary structure comprises 313 residues: Ornithine carbamoyltransferase (313 aa).

Residues 61–64, Gln88, Arg112, and 139–142 each bind carbamoyl phosphate; these read STRT and HPCQ. Residues Asn170, Asp228, and 232 to 233 contribute to the L-ornithine site; that span reads SM. Carbamoyl phosphate is bound by residues 268 to 269 and Arg296; that span reads CL.

This sequence belongs to the aspartate/ornithine carbamoyltransferase superfamily. OTCase family.

It localises to the cytoplasm. The enzyme catalyses carbamoyl phosphate + L-ornithine = L-citrulline + phosphate + H(+). It functions in the pathway amino-acid biosynthesis; L-arginine biosynthesis; L-arginine from L-ornithine and carbamoyl phosphate: step 1/3. Its function is as follows. Reversibly catalyzes the transfer of the carbamoyl group from carbamoyl phosphate (CP) to the N(epsilon) atom of ornithine (ORN) to produce L-citrulline. The protein is Ornithine carbamoyltransferase of Bordetella avium (strain 197N).